The following is a 358-amino-acid chain: Alanine racemase, biosynthetic (358 aa).

Catalysis depends on Lys34, which acts as the Proton acceptor; specific for D-alanine. Lys34 carries the N6-(pyridoxal phosphate)lysine modification. A substrate-binding site is contributed by Arg130. Residue Tyr254 is the Proton acceptor; specific for L-alanine of the active site. Met302 lines the substrate pocket.

Belongs to the alanine racemase family. Requires pyridoxal 5'-phosphate as cofactor.

The enzyme catalyses L-alanine = D-alanine. The protein operates within amino-acid biosynthesis; D-alanine biosynthesis; D-alanine from L-alanine: step 1/1. Its pathway is cell wall biogenesis; peptidoglycan biosynthesis. In terms of biological role, catalyzes the interconversion of L-alanine and D-alanine. Provides the D-alanine required for cell wall biosynthesis. The protein is Alanine racemase, biosynthetic (alr) of Pseudomonas aeruginosa (strain ATCC 15692 / DSM 22644 / CIP 104116 / JCM 14847 / LMG 12228 / 1C / PRS 101 / PAO1).